Reading from the N-terminus, the 254-residue chain is HTH-type transcriptional regulator GlvR (254 aa).

An HTH rpiR-type domain is found at 1 to 77 (MQLEELINQH…VFLKWEDQPE (77 aa)). The H-T-H motif DNA-binding region spans 37 to 56 (IDALAKACSVSRSSILRLAQ). The region spanning 106–248 (MCQLIDAADR…FRAYVDYKEA (143 aa)) is the SIS domain.

In terms of biological role, positive regulator of the glv operon expression, which consists of GlvA, GlvR and GlvC. This is HTH-type transcriptional regulator GlvR (glvR) from Bacillus subtilis (strain 168).